A 668-amino-acid chain; its full sequence is Tyrosine-protein phosphatase non-receptor type ptp-2 (668 aa).

SH2 domains are found at residues 10–113 (NFYY…KKPV) and 134–232 (WWHG…EEPL). Positions 264–580 (ISEEFDRLSQ…QFLYKALAFY (317 aa)) constitute a Tyrosine-protein phosphatase domain. The Phosphocysteine intermediate role is filled by C518. Residues 603 to 668 (PRRLRPTPNA…SSTLLKSTKK (66 aa)) form a disordered region. Low complexity-rich tracts occupy residues 616-634 (SSAR…SSRT) and 652-668 (STSS…STKK).

The protein belongs to the protein-tyrosine phosphatase family. Non-receptor class 2 subfamily. Expressed in embryonic cells, developing vulva, body wall muscles, head neurons and gonadal sheath cells.

It localises to the cytoplasm. It catalyses the reaction O-phospho-L-tyrosyl-[protein] + H2O = L-tyrosyl-[protein] + phosphate. Functionally, involved in embryonic and larval development. Plays a role in oogenesis by regulating mpk-1 phosphorylation and oocyte maturation in response to major sperm protein (MSP). During the formation of neuromuscular junctions at the larval stage, negatively regulates membrane protrusion from body wall muscles probably downstream of receptor egl-15. Plays a role in fluid homeostasis probably downstream of receptor egl-15 and adapter soc-1. Promotes vulva induction and negatively regulates fertility probably downstream of receptor let-23. Negatively regulates daf-2-mediated repression of dauer formation. The chain is Tyrosine-protein phosphatase non-receptor type ptp-2 from Caenorhabditis elegans.